The sequence spans 273 residues: Programmed cell death 1 ligand 2 (273 aa).

The signal sequence occupies residues 1-19 (MIFLLLMLSLELQLHQIAA). Residues 20 to 220 (LFTVTVPKEL…SQMEPRTHPT (201 aa)) lie on the Extracellular side of the membrane. The Ig-like V-type domain maps to 21–118 (FTVTVPKELY…AWDYKYLTLK (98 aa)). 5 N-linked (GlcNAc...) asparagine glycosylation sites follow: Asn-37, Asn-64, Asn-157, Asn-163, and Asn-189. Disulfide bonds link Cys-42–Cys-102 and Cys-143–Cys-192. In terms of domain architecture, Ig-like C2-type spans 122 to 203 (SYRKINTHIL…FWNTHVRELT (82 aa)). Residues 221–241 (WLLHIFIPFCIIAFIFIATVI) traverse the membrane as a helical segment. At 242 to 273 (ALRKQLCQKLYSSKDTTKRPVTTTKREVNSAI) the chain is on the cytoplasmic side.

This sequence belongs to the immunoglobulin superfamily. BTN/MOG family. Interacts with PDCD1. In terms of tissue distribution, highly expressed in heart, placenta, pancreas, lung and liver and weakly expressed in spleen, lymph nodes and thymus.

It is found in the secreted. Its subcellular location is the endomembrane system. It localises to the cell membrane. In terms of biological role, involved in the costimulatory signal, essential for T-cell proliferation and IFNG production in a PDCD1-independent manner. Interaction with PDCD1 inhibits T-cell proliferation by blocking cell cycle progression and cytokine production. The sequence is that of Programmed cell death 1 ligand 2 (PDCD1LG2) from Homo sapiens (Human).